A 520-amino-acid polypeptide reads, in one-letter code: N-acetylgalactosamine-6-sulfatase (520 aa).

An N-terminal signal peptide occupies residues 1-23 (MAACTAAQQLLLVLSALGLLAAG). Residues 24–377 (APQPPNIVLL…PTMLKGQMMD (354 aa)) are catalytic domain. The Ca(2+) site is built by aspartate 36, aspartate 37, and cysteine 76. Cysteine 76 acts as the Nucleophile in catalysis. Cysteine 76 carries the 3-oxoalanine (Cys) modification. Histidine 139 is an active-site residue. N-linked (GlcNAc...) asparagine glycosylation occurs at asparagine 201. Positions 286 and 287 each coordinate Ca(2+). Cysteines 306 and 417 form a disulfide. The N-linked (GlcNAc...) asparagine glycan is linked to asparagine 421. 2 disulfide bridges follow: cysteine 487/cysteine 516 and cysteine 499/cysteine 505.

This sequence belongs to the sulfatase family. Homodimer. It depends on Ca(2+) as a cofactor. The conversion to 3-oxoalanine (also known as C-formylglycine, FGly), of a serine or cysteine residue in prokaryotes and of a cysteine residue in eukaryotes, is critical for catalytic activity. Widely expressed. Higher expression in liver and kidney.

The protein resides in the lysosome. It catalyses the reaction Hydrolysis of the 6-sulfate groups of the N-acetyl-D-galactosamine 6-sulfate units of chondroitin sulfate and of the D-galactose 6-sulfate units of keratan sulfate.. The protein is N-acetylgalactosamine-6-sulfatase (Galns) of Mus musculus (Mouse).